The sequence spans 295 residues: Pyridoxal 5'-phosphate synthase subunit PdxS (295 aa).

Aspartate 25 is a binding site for D-ribose 5-phosphate. Lysine 82 (schiff-base intermediate with D-ribose 5-phosphate) is an active-site residue. Position 154 (glycine 154) interacts with D-ribose 5-phosphate. Arginine 166 is a binding site for D-glyceraldehyde 3-phosphate. D-ribose 5-phosphate-binding positions include glycine 215 and 236–237; that span reads GS.

This sequence belongs to the PdxS/SNZ family. As to quaternary structure, in the presence of PdxT, forms a dodecamer of heterodimers.

It carries out the reaction aldehydo-D-ribose 5-phosphate + D-glyceraldehyde 3-phosphate + L-glutamine = pyridoxal 5'-phosphate + L-glutamate + phosphate + 3 H2O + H(+). It functions in the pathway cofactor biosynthesis; pyridoxal 5'-phosphate biosynthesis. Functionally, catalyzes the formation of pyridoxal 5'-phosphate from ribose 5-phosphate (RBP), glyceraldehyde 3-phosphate (G3P) and ammonia. The ammonia is provided by the PdxT subunit. Can also use ribulose 5-phosphate and dihydroxyacetone phosphate as substrates, resulting from enzyme-catalyzed isomerization of RBP and G3P, respectively. This chain is Pyridoxal 5'-phosphate synthase subunit PdxS, found in Staphylococcus haemolyticus (strain JCSC1435).